A 111-amino-acid polypeptide reads, in one-letter code: uncharacterized protein (111 aa).

This is an uncharacterized protein from Bacillus subtilis (strain 168).